We begin with the raw amino-acid sequence, 628 residues long: Probable potassium transport system protein Kup (628 aa).

12 helical membrane-spanning segments follow: residues Ala-12–Ser-32, Leu-57–Val-77, Trp-106–Thr-126, Ile-141–Phe-161, Phe-174–Ile-194, Leu-219–Ala-239, Trp-253–Leu-273, Leu-295–Phe-315, Ile-343–Phe-363, Leu-369–Val-389, Ala-402–Leu-422, and Leu-425–Ser-445.

The protein belongs to the HAK/KUP transporter (TC 2.A.72) family.

Its subcellular location is the cell inner membrane. The catalysed reaction is K(+)(in) + H(+)(in) = K(+)(out) + H(+)(out). In terms of biological role, transport of potassium into the cell. Likely operates as a K(+):H(+) symporter. The sequence is that of Probable potassium transport system protein Kup from Azorhizobium caulinodans (strain ATCC 43989 / DSM 5975 / JCM 20966 / LMG 6465 / NBRC 14845 / NCIMB 13405 / ORS 571).